A 365-amino-acid chain; its full sequence is Spermine synthase (365 aa).

Alanine 2 carries the post-translational modification N-acetylalanine. Serine 57 carries the post-translational modification Phosphoserine. The region spanning 121-361 (RYWPTADGRL…ELWVFYTVWK (241 aa)) is the PABS domain. Position 147 (glutamine 147) interacts with S-adenosyl 3-(methylsulfanyl)propylamine. Spermidine is bound by residues tyrosine 176 and aspartate 200. S-adenosyl 3-(methylsulfanyl)propylamine-binding positions include glutamate 219 and 254 to 255 (DC). The active-site Proton acceptor is the aspartate 275. Residues tyrosine 350 and glutamate 352 each coordinate spermidine.

Belongs to the spermidine/spermine synthase family. Homodimer. Dimerization is mediated through the N-terminal domain and seems to be required for activity as deletion of the N-terminal domain causes complete loss of activity.

The enzyme catalyses S-adenosyl 3-(methylsulfanyl)propylamine + spermidine = spermine + S-methyl-5'-thioadenosine + H(+). It functions in the pathway amine and polyamine biosynthesis; spermine biosynthesis; spermine from spermidine: step 1/1. Catalyzes the production of spermine from spermidine and decarboxylated S-adenosylmethionine (dcSAM). The protein is Spermine synthase (SMS) of Bos taurus (Bovine).